Here is a 194-residue protein sequence, read N- to C-terminus: ATP-dependent Clp protease proteolytic subunit (194 aa).

The active-site Nucleophile is Ser-98. His-123 is a catalytic residue.

Belongs to the peptidase S14 family. As to quaternary structure, fourteen ClpP subunits assemble into 2 heptameric rings which stack back to back to give a disk-like structure with a central cavity, resembling the structure of eukaryotic proteasomes.

It is found in the cytoplasm. The catalysed reaction is Hydrolysis of proteins to small peptides in the presence of ATP and magnesium. alpha-casein is the usual test substrate. In the absence of ATP, only oligopeptides shorter than five residues are hydrolyzed (such as succinyl-Leu-Tyr-|-NHMec, and Leu-Tyr-Leu-|-Tyr-Trp, in which cleavage of the -Tyr-|-Leu- and -Tyr-|-Trp bonds also occurs).. Functionally, cleaves peptides in various proteins in a process that requires ATP hydrolysis. Has a chymotrypsin-like activity. Plays a major role in the degradation of misfolded proteins. The protein is ATP-dependent Clp protease proteolytic subunit of Sodalis glossinidius (strain morsitans).